Reading from the N-terminus, the 348-residue chain is Uroporphyrinogen decarboxylase (348 aa).

Substrate-binding positions include 27–31 (RQAGR), phenylalanine 46, aspartate 76, tyrosine 152, serine 207, and histidine 320.

Belongs to the uroporphyrinogen decarboxylase family. Homodimer.

The protein resides in the cytoplasm. The enzyme catalyses uroporphyrinogen III + 4 H(+) = coproporphyrinogen III + 4 CO2. It functions in the pathway porphyrin-containing compound metabolism; protoporphyrin-IX biosynthesis; coproporphyrinogen-III from 5-aminolevulinate: step 4/4. In terms of biological role, catalyzes the decarboxylation of four acetate groups of uroporphyrinogen-III to yield coproporphyrinogen-III. In Bacillus thuringiensis (strain Al Hakam), this protein is Uroporphyrinogen decarboxylase.